We begin with the raw amino-acid sequence, 62 residues long: Photosystem II reaction center protein Z (62 aa).

2 helical membrane-spanning segments follow: residues 8–28 (LVLL…VVLA) and 41–61 (YTGA…NSLV).

This sequence belongs to the PsbZ family. In terms of assembly, PSII is composed of 1 copy each of membrane proteins PsbA, PsbB, PsbC, PsbD, PsbE, PsbF, PsbH, PsbI, PsbJ, PsbK, PsbL, PsbM, PsbT, PsbX, PsbY, PsbZ, Psb30/Ycf12, at least 3 peripheral proteins of the oxygen-evolving complex and a large number of cofactors. It forms dimeric complexes.

The protein localises to the plastid. Its subcellular location is the chloroplast thylakoid membrane. In terms of biological role, may control the interaction of photosystem II (PSII) cores with the light-harvesting antenna, regulates electron flow through the 2 photosystem reaction centers. PSII is a light-driven water plastoquinone oxidoreductase, using light energy to abstract electrons from H(2)O, generating a proton gradient subsequently used for ATP formation. The protein is Photosystem II reaction center protein Z of Porphyra purpurea (Red seaweed).